The sequence spans 165 residues: Myosin regulatory light chain 2B, cardiac muscle isoform (165 aa).

Residue Ala2 is modified to N,N,N-trimethylalanine. 3 consecutive EF-hand domains span residues 23 to 58 (TQIQ…LGRL), 93 to 128 (DPEE…QEGR), and 129 to 164 (FSQE…GEEK). Ca(2+) contacts are provided by Asp36, Asn38, Asp40, and Asp47.

In terms of assembly, myosin is a hexamer of 2 heavy chains and 4 light chains. In terms of processing, the N-terminus is blocked. N,N,N-trimethylalanine, found in other myosin light chains would not have been detected in the N-terminal tryptic peptide in PubMed:7319048 because it would remain trimethylated and ninhydrin negative after hydrolysis.

The protein is Myosin regulatory light chain 2B, cardiac muscle isoform of Gallus gallus (Chicken).